The sequence spans 301 residues: uncharacterized protein (301 aa).

Catalysis depends on charge relay system residues Ser44 and Tyr107. Tyr133 acts as the Proton donor in catalysis. Residue Lys162 is the Schiff-base intermediate with substrate of the active site.

This sequence belongs to the DapA family. In terms of assembly, homotetramer.

It is found in the cytoplasm. This is an uncharacterized protein from Pyrobaculum islandicum (strain DSM 4184 / JCM 9189 / GEO3).